The primary structure comprises 394 residues: GTPase Obg (394 aa).

The Obg domain maps to 4–162 (SNFVDYVKIY…LMVILELKLL (159 aa)). Residues 163-329 (ADVGLVGFPN…LKDILWTELN (167 aa)) enclose the OBG-type G domain. GTP is bound by residues 169–176 (GFPNAGKS), 194–198 (FTTLE), 216–219 (DIPG), 283–286 (TKSD), and 310–312 (SSV). Residues serine 176 and threonine 196 each contribute to the Mg(2+) site. The interval 358–394 (KDMGEDEDFEYEYEEDADDDFDYEYEDENWDEEEEKK) is disordered. Acidic residues predominate over residues 361–394 (GEDEDFEYEYEEDADDDFDYEYEDENWDEEEEKK).

This sequence belongs to the TRAFAC class OBG-HflX-like GTPase superfamily. OBG GTPase family. As to quaternary structure, monomer. The cofactor is Mg(2+).

Its subcellular location is the cytoplasm. An essential GTPase which binds GTP, GDP and possibly (p)ppGpp with moderate affinity, with high nucleotide exchange rates and a fairly low GTP hydrolysis rate. Plays a role in control of the cell cycle, stress response, ribosome biogenesis and in those bacteria that undergo differentiation, in morphogenesis control. The polypeptide is GTPase Obg (Phocaeicola vulgatus (strain ATCC 8482 / DSM 1447 / JCM 5826 / CCUG 4940 / NBRC 14291 / NCTC 11154) (Bacteroides vulgatus)).